The chain runs to 332 residues: Ketol-acid reductoisomerase (NADP(+)) (332 aa).

The KARI N-terminal Rossmann domain occupies 2-182 (ANIYYDEDAS…GATRAGLIET (181 aa)). NADP(+) contacts are provided by residues 25-28 (YGSQ), Ser-51, Ser-53, and 83-86 (DTVQ). The active site involves His-108. An NADP(+)-binding site is contributed by Gly-134. The KARI C-terminal knotted domain maps to 183–327 (TFKEETETDL…KELRKMMPWL (145 aa)). The Mg(2+) site is built by Asp-191, Glu-195, Glu-227, and Glu-231. Ser-252 is a substrate binding site.

This sequence belongs to the ketol-acid reductoisomerase family. Mg(2+) is required as a cofactor.

The enzyme catalyses (2R)-2,3-dihydroxy-3-methylbutanoate + NADP(+) = (2S)-2-acetolactate + NADPH + H(+). It carries out the reaction (2R,3R)-2,3-dihydroxy-3-methylpentanoate + NADP(+) = (S)-2-ethyl-2-hydroxy-3-oxobutanoate + NADPH + H(+). The protein operates within amino-acid biosynthesis; L-isoleucine biosynthesis; L-isoleucine from 2-oxobutanoate: step 2/4. It participates in amino-acid biosynthesis; L-valine biosynthesis; L-valine from pyruvate: step 2/4. In terms of biological role, involved in the biosynthesis of branched-chain amino acids (BCAA). Catalyzes an alkyl-migration followed by a ketol-acid reduction of (S)-2-acetolactate (S2AL) to yield (R)-2,3-dihydroxy-isovalerate. In the isomerase reaction, S2AL is rearranged via a Mg-dependent methyl migration to produce 3-hydroxy-3-methyl-2-ketobutyrate (HMKB). In the reductase reaction, this 2-ketoacid undergoes a metal-dependent reduction by NADPH to yield (R)-2,3-dihydroxy-isovalerate. The protein is Ketol-acid reductoisomerase (NADP(+)) of Sulfurihydrogenibium sp. (strain YO3AOP1).